Consider the following 94-residue polypeptide: Large ribosomal subunit protein uL23 (94 aa).

This sequence belongs to the universal ribosomal protein uL23 family. In terms of assembly, part of the 50S ribosomal subunit. Contacts protein L29, and trigger factor when it is bound to the ribosome.

One of the early assembly proteins it binds 23S rRNA. One of the proteins that surrounds the polypeptide exit tunnel on the outside of the ribosome. Forms the main docking site for trigger factor binding to the ribosome. This chain is Large ribosomal subunit protein uL23, found in Roseiflexus castenholzii (strain DSM 13941 / HLO8).